The sequence spans 364 residues: DNA replication and repair protein RecF (364 aa).

Position 30 to 37 (30 to 37) interacts with ATP; that stretch reads GNNGQGKT.

The protein belongs to the RecF family.

It is found in the cytoplasm. Functionally, the RecF protein is involved in DNA metabolism; it is required for DNA replication and normal SOS inducibility. RecF binds preferentially to single-stranded, linear DNA. It also seems to bind ATP. In Geobacter sp. (strain M21), this protein is DNA replication and repair protein RecF.